Here is a 264-residue protein sequence, read N- to C-terminus: 3-methyl-2-oxobutanoate hydroxymethyltransferase (264 aa).

The Mg(2+) site is built by Asp-45 and Asp-84. 3-methyl-2-oxobutanoate-binding positions include 45 to 46 (DS), Asp-84, and Lys-112. Glu-114 provides a ligand contact to Mg(2+). Catalysis depends on Glu-181, which acts as the Proton acceptor.

Belongs to the PanB family. Homodecamer; pentamer of dimers. It depends on Mg(2+) as a cofactor.

Its subcellular location is the cytoplasm. The catalysed reaction is 3-methyl-2-oxobutanoate + (6R)-5,10-methylene-5,6,7,8-tetrahydrofolate + H2O = 2-dehydropantoate + (6S)-5,6,7,8-tetrahydrofolate. Its pathway is cofactor biosynthesis; (R)-pantothenate biosynthesis; (R)-pantoate from 3-methyl-2-oxobutanoate: step 1/2. Its function is as follows. Catalyzes the reversible reaction in which hydroxymethyl group from 5,10-methylenetetrahydrofolate is transferred onto alpha-ketoisovalerate to form ketopantoate. This is 3-methyl-2-oxobutanoate hydroxymethyltransferase from Shigella boydii serotype 18 (strain CDC 3083-94 / BS512).